A 342-amino-acid polypeptide reads, in one-letter code: 11-beta-hydroxysteroid dehydrogenase-like 6 (342 aa).

The chain crosses the membrane as a helical; Signal-anchor for type II membrane protein span at residues 10-30 (FLFPLLTLYALLVFYPTYQRL). NADP(+)-binding positions include 54-80 (GAAS…VDIR) and D105. S184 serves as a coordination point for substrate. Residue Y197 is the Proton acceptor of the active site. NADP(+) contacts are provided by residues 197 to 201 (YCASK) and K201.

Belongs to the short-chain dehydrogenases/reductases (SDR) family.

It localises to the membrane. The sequence is that of 11-beta-hydroxysteroid dehydrogenase-like 6 (HSD6) from Arabidopsis thaliana (Mouse-ear cress).